The sequence spans 514 residues: Peptide chain release factor 3 (514 aa).

The 261-residue stretch at lysine 8 to histidine 268 folds into the tr-type G domain. GTP-binding positions include serine 17–threonine 24, aspartate 85–histidine 89, and asparagine 139–aspartate 142.

This sequence belongs to the TRAFAC class translation factor GTPase superfamily. Classic translation factor GTPase family. PrfC subfamily.

It localises to the cytoplasm. In terms of biological role, increases the formation of ribosomal termination complexes and stimulates activities of RF-1 and RF-2. It binds guanine nucleotides and has strong preference for UGA stop codons. It may interact directly with the ribosome. The stimulation of RF-1 and RF-2 is significantly reduced by GTP and GDP, but not by GMP. This chain is Peptide chain release factor 3, found in Streptococcus uberis (strain ATCC BAA-854 / 0140J).